The sequence spans 365 residues: MAAAAAGTATSQRFFQSFSDALIDEDPQAALEELTKALEQKPDDAQYYCQRAYCHILLGNYCVAVADAKKSLELNPNNSTAMLRKGICEYHEKNYAAALETFTEGQKLDIETGFHRVGQAGLQLLTSSDPPALDSQSAGITGADANFSVWIKRCQEAQNGSESEVWTHQSKIKYDWYQTESQVVITLMIKNVQKNDVNVEFSEKELSALVKLPSGEDYNLKLELLHPIIPEQSTFKVLSTKIEIKLKKPEAVRWEKLEGQGDVPTPKQFVADVKNLYPSSSPYTRNWDKLVGEIKEEEKNEKLEGDAALNRLFQQIYSDGSDEVKRAMNKSFMESGGTVLSTNWSDVGKRKVEINPPDDMEWKKY.

Residue Ala-2 is modified to N-acetylalanine. 3 TPR repeats span residues 11–44 (SQRFFQSFSDALIDEDPQAALEELTKALEQKPDD), 45–78 (AQYYCQRAYCHILLGNYCVAVADAKKSLELNPNN), and 79–112 (STAMLRKGICEYHEKNYAAALETFTEGQKLDIET). Residues 169 to 258 (QSKIKYDWYQ…PEAVRWEKLE (90 aa)) enclose the CS domain. Phosphothreonine is present on Thr-265. The 90-residue stretch at 276–365 (LYPSSSPYTR…PPDDMEWKKY (90 aa)) folds into the SGS domain. Ser-281 is subject to Phosphoserine. Thr-284 is modified (phosphothreonine). Lys-295 participates in a covalent cross-link: Glycyl lysine isopeptide (Lys-Gly) (interchain with G-Cter in SUMO1); alternate. Lys-295 participates in a covalent cross-link: Glycyl lysine isopeptide (Lys-Gly) (interchain with G-Cter in SUMO2); alternate. Position 331 is a phosphoserine (Ser-331).

This sequence belongs to the SGT1 family. Probably associates with SCF (SKP1-CUL1-F-box protein) complex through interaction with SKP1. Interacts with S100A6. Interacts with HSP90. Phosphorylated at Ser-281 and Ser-331, dephosphorylation promotes nuclear translocation, most likely due to disruption of the SUGT1-HSP90 complex.

The protein resides in the cytoplasm. It is found in the nucleus. Its function is as follows. May play a role in ubiquitination and subsequent proteasomal degradation of target proteins. The protein is Protein SGT1 homolog of Homo sapiens (Human).